Here is a 536-residue protein sequence, read N- to C-terminus: Inactive phospholipase D5 (536 aa).

The helical transmembrane segment at 69-89 (IVIFALVCCFAILVALIFSAV) threads the bilayer. Asparagine 121 is a glycosylation site (N-linked (GlcNAc...) asparagine). One can recognise a PLD phosphodiesterase 1 domain in the interval 215-242 (NKGRLQSSFWIVDKQHVYIGSAGLDWQS). Asparagine 302 carries an N-linked (GlcNAc...) asparagine glycan. The 27-residue stretch at 434-460 (FPRLNRNKYMVTDGAAYIGNFDWVGND) folds into the PLD phosphodiesterase 2 domain.

Belongs to the phospholipase D family.

The protein localises to the membrane. The polypeptide is Inactive phospholipase D5 (PLD5) (Homo sapiens (Human)).